Consider the following 233-residue polypeptide: Ribosome maturation factor RimM (233 aa).

Residues 1–51 (MKRKQDSKGAGSRGQGAGEKKQGAGGRGQGEKKQKKSPVPSPQSPVPDPDE) form a disordered region. Residues 11 to 28 (GSRGQGAGEKKQGAGGRG) are compositionally biased toward gly residues. Residues 145–226 (GEDEYHVVDL…RIEITPPPGL (82 aa)) enclose the PRC barrel domain.

This sequence belongs to the RimM family. In terms of assembly, binds ribosomal protein uS19.

The protein resides in the cytoplasm. Its function is as follows. An accessory protein needed during the final step in the assembly of 30S ribosomal subunit, possibly for assembly of the head region. Essential for efficient processing of 16S rRNA. May be needed both before and after RbfA during the maturation of 16S rRNA. It has affinity for free ribosomal 30S subunits but not for 70S ribosomes. This chain is Ribosome maturation factor RimM, found in Trichormus variabilis (strain ATCC 29413 / PCC 7937) (Anabaena variabilis).